Consider the following 163-residue polypeptide: Pheromone-binding protein (163 aa).

The N-terminal stretch at 1–21 is a signal peptide; it reads MLRKISLLLLPVFVAINLVHS. Disulfide bonds link cysteine 40/cysteine 75, cysteine 71/cysteine 129, and cysteine 118/cysteine 138.

It belongs to the PBP/GOBP family. As to quaternary structure, homodimer. Antenna.

Functionally, this major soluble protein in olfactory sensilla of male moths might serve to solubilize the extremely hydrophobic pheromone molecules and to transport pheromone through the aqueous lymph to receptors located on olfactory cilia. In Antheraea polyphemus (Polyphemus moth), this protein is Pheromone-binding protein.